Consider the following 306-residue polypeptide: UDP-N-acetylenolpyruvoylglucosamine reductase (306 aa).

An FAD-binding PCMH-type domain is found at 34 to 198 (VGGPADLLIT…LEVTFKLHNS (165 aa)). R177 is an active-site residue. S227 serves as the catalytic Proton donor. The active site involves E297.

The protein belongs to the MurB family. FAD serves as cofactor.

It localises to the cytoplasm. It catalyses the reaction UDP-N-acetyl-alpha-D-muramate + NADP(+) = UDP-N-acetyl-3-O-(1-carboxyvinyl)-alpha-D-glucosamine + NADPH + H(+). Its pathway is cell wall biogenesis; peptidoglycan biosynthesis. Functionally, cell wall formation. In Clostridium botulinum (strain Okra / Type B1), this protein is UDP-N-acetylenolpyruvoylglucosamine reductase.